A 194-amino-acid polypeptide reads, in one-letter code: Molybdenum cofactor guanylyltransferase (194 aa).

GTP contacts are provided by residues 12-14 (LAG), Lys-25, Asn-53, Asp-70, and Asp-100. A Mg(2+)-binding site is contributed by Asp-100.

The protein belongs to the MobA family. In terms of assembly, monomer. Mg(2+) is required as a cofactor.

The protein localises to the cytoplasm. It catalyses the reaction Mo-molybdopterin + GTP + H(+) = Mo-molybdopterin guanine dinucleotide + diphosphate. Functionally, transfers a GMP moiety from GTP to Mo-molybdopterin (Mo-MPT) cofactor (Moco or molybdenum cofactor) to form Mo-molybdopterin guanine dinucleotide (Mo-MGD) cofactor. The polypeptide is Molybdenum cofactor guanylyltransferase (Aliivibrio fischeri (strain MJ11) (Vibrio fischeri)).